Consider the following 761-residue polypeptide: MSSLISRLRKLFKSRNTHDFSNLCKENYQTLLSSEEGKILLGIYHFLSGEPQKAEELLSQVSENSLNSAQGLSDLGLLYFFLGRVEDAERVLKKALKFSDVDDALYARLGALYYSQGKLEEAQHYWERALSLNPNKVEILYNLGVLHLNKGELEKALDLFERALRLKPDFREAEEKKTLILLSLNRIDELVEEYYRELEKNPNEEVYIKLGNTLYTAGRLAEARAVFQEGAEKFPHDPRLKLGLIEVLKEEGRTYQAGTLLKEWLEDTSWVDEEKTPNKDEFLMQMRFRLNELRIQASFLDTAEKDLEKVENKEDYPEYYILKSKILMERNKGLEAADLLREAKERFPAHLGVLQELVHVLTSIGELEEAKEIQSQIVAINPSAVIQQVEMEDYKATDEQIQVLETLLNSPAVPKQTRASAGFVLHKVLEKRKDYDKAFEVLIKANELVKEEINYDWREHRFMIQRTIEVFTPEVVERLKGRGHPSKRPIFVLGMPRSGTTLTEQILGSHSMVYPAGELPFVPKIVNLIPKALQYVGKEPKEWPEAILEFDERLLKSAAQYYLDRVAKLDSEHPRIVDKLPHNFDYVGLILLMFPNAKVIHLKRNDLDVAVSNYQQNFAAKHGTMGFAFDLRWIGHMLNDHRAIMEHWHKLFPGQIYELDYQRLTEEPEEVIRELLEFCELPWEDRVLEYYKTKRPVKTASIKQVRKGIYRSSVEKWRRYEKYLTPVIEILQEGFKKLEDPEIEKYQDKVIPKGLVGYTVG.

8 TPR repeats span residues 35–68 (EEGK…SLNS), 69–102 (AQGL…SDVD), 103–136 (DALY…NPNK), 137–170 (VEIL…KPDF), 172–203 (EAEE…KNPN), 204–237 (EEVY…FPHD), 351–384 (LGVL…NPSA), and 419–452 (ASAG…VKEE). The protein sulfotransferase-like stretch occupies residues 487-761 (KRPIFVLGMP…PKGLVGYTVG (275 aa)).

It in the C-terminal section; belongs to the protein sulfotransferase family.

This is an uncharacterized protein from Aquifex aeolicus (strain VF5).